The primary structure comprises 276 residues: Melibiose/raffinose/stachyose import permease protein MelC (276 aa).

6 consecutive transmembrane segments (helical) span residues 11-31 (IITLLAAIVACAHFIPFYILL), 74-94 (IITGFSALLLIIFGSLAAYPL), 104-124 (AVFALLISIMIIPPLTSMVPL), 139-159 (IAIFINTAAYMPLTVFLYSGF), 186-206 (IVFPLLKPITATICIISCVFI), and 240-260 (LHLVAAAALMAMLPMVVLFLA). The ABC transmembrane type-1 domain occupies 69 to 261 (FINTMIITGF…LPMVVLFLAL (193 aa)).

This sequence belongs to the binding-protein-dependent transport system permease family. As to quaternary structure, the complex is composed of two ATP-binding proteins (MsmX), two transmembrane proteins (MelC and MelD) and a solute-binding protein (MelE).

It is found in the cell membrane. Part of the ABC transporter complex MelEDC-MsmX involved in melibiose, raffinose and stachyose import. Probably responsible for the translocation of the substrate across the membrane. The chain is Melibiose/raffinose/stachyose import permease protein MelC from Bacillus subtilis (strain 168).